Here is a 208-residue protein sequence, read N- to C-terminus: Large ribosomal subunit protein uL4 (208 aa).

The interval 45-89 (RQGTHAHKNRSAVSGGGKKPWRQKGTGRARQGSTRSPQWRGGGTV) is disordered.

This sequence belongs to the universal ribosomal protein uL4 family. Part of the 50S ribosomal subunit.

In terms of biological role, one of the primary rRNA binding proteins, this protein initially binds near the 5'-end of the 23S rRNA. It is important during the early stages of 50S assembly. It makes multiple contacts with different domains of the 23S rRNA in the assembled 50S subunit and ribosome. Functionally, forms part of the polypeptide exit tunnel. This Lactococcus lactis subsp. cremoris (strain SK11) protein is Large ribosomal subunit protein uL4.